The following is a 24-amino-acid chain: Ascaphin-5 (24 aa).

As to expression, expressed by the skin glands.

It is found in the secreted. In terms of biological role, antimicrobial peptide. Synthetic peptide shows higher potency against Gram-negative bacteria than against Gram-positive bacteria. Has a very week hemolytic activity. The sequence is that of Ascaphin-5 from Ascaphus truei (Coastal tailed frog).